Here is a 501-residue protein sequence, read N- to C-terminus: Putative glycogen synthase kinase-3 homolog (501 aa).

Positions Tyr33–Phe317 constitute a Protein kinase domain. Residues Val39–Val47 and Lys62 contribute to the ATP site. Asp158 functions as the Proton acceptor in the catalytic mechanism. A Phosphotyrosine modification is found at Tyr193. 2 disordered regions span residues Leu355–Val427 and Ser446–Asn501. The segment covering Glu381–Gln390 has biased composition (basic and acidic residues). Acidic residues-rich tracts occupy residues Glu451 to Asp471 and Asp482 to Asn501.

Belongs to the protein kinase superfamily. CMGC Ser/Thr protein kinase family. GSK-3 subfamily. Post-translationally, phosphorylation on Tyr-193 is necessary for the activity.

The catalysed reaction is L-seryl-[tau protein] + ATP = O-phospho-L-seryl-[tau protein] + ADP + H(+). The enzyme catalyses L-threonyl-[tau protein] + ATP = O-phospho-L-threonyl-[tau protein] + ADP + H(+). The polypeptide is Putative glycogen synthase kinase-3 homolog (gskt) (Drosophila melanogaster (Fruit fly)).